The sequence spans 391 residues: Transmembrane protein 79 (391 aa).

A disordered region spans residues 1–114; that stretch reads MTEPETLALL…TKSEEPFKED (114 aa). The Cytoplasmic portion of the chain corresponds to 1 to 200; it reads MTEPETLALL…GREALRAVAS (200 aa). Basic and acidic residues predominate over residues 103 to 114; sequence APTKSEEPFKED. The chain crosses the membrane as a helical span at residues 201–221; it reads VVAALIFFPCLLYGAYAFLPF. The Extracellular portion of the chain corresponds to 222–240; that stretch reads DAPRLPTMSSRLVYTLRCG. The chain crosses the membrane as a helical span at residues 241–261; sequence VFATFPIVLGLLVYGLSLLCF. The Cytoplasmic portion of the chain corresponds to 262–279; it reads SALRPFGEPRREVEIHRQ. A helical membrane pass occupies residues 280–300; that stretch reads YVAQSVQLFILYFFNLAVLST. At 301–309 the chain is on the extracellular side; sequence YLPQDTLKL. A helical membrane pass occupies residues 310-330; sequence LPLLTGLFAISRLIYWLTFAV. The Cytoplasmic portion of the chain corresponds to 331–339; sequence GRSFRGFGY. A helical transmembrane segment spans residues 340–360; sequence GLTFLPLLAMLVWNLYYMFVV. The Extracellular segment spans residues 361-391; it reads EPERMLTASESRLDYPDHARSVSDYRPRSWG.

In terms of tissue distribution, expressed in the epidermis of the skin. Expressed in epithelial cells of the outermost layer of the stratum granulosum (SG) and in hair follicles (at protein level).

It is found in the lysosome. The protein localises to the golgi apparatus. The protein resides in the trans-Golgi network. It localises to the membrane. In terms of biological role, contributes to the epidermal integrity and skin barrier function. Plays a role in the lamellar granule (LG) secretory system and in the stratum corneum (SC) epithelial cell formation. This is Transmembrane protein 79 (Tmem79) from Mus musculus (Mouse).